The following is a 322-amino-acid chain: Ferredoxin--NADP reductase (322 aa).

Residues Asp-34, Gln-42, Tyr-47, Val-87, Phe-120, Asp-279, and Thr-320 each contribute to the FAD site.

The protein belongs to the ferredoxin--NADP reductase type 2 family. As to quaternary structure, homodimer. Requires FAD as cofactor.

The enzyme catalyses 2 reduced [2Fe-2S]-[ferredoxin] + NADP(+) + H(+) = 2 oxidized [2Fe-2S]-[ferredoxin] + NADPH. The sequence is that of Ferredoxin--NADP reductase from Streptococcus pneumoniae (strain Hungary19A-6).